The chain runs to 687 residues: Protein-glutamine gamma-glutamyltransferase 2 (687 aa).

The residue at position 2 (alanine 2) is an N-acetylalanine. Intrachain disulfides connect cysteine 230/cysteine 370 and cysteine 370/cysteine 371. Active-site residues include cysteine 277, histidine 335, and aspartate 358. 5 residues coordinate Ca(2+): asparagine 398, aspartate 400, glutamate 437, glutamate 447, and glutamate 452. Residue lysine 468 is modified to N6-acetyllysine. 476-483 (RIRVGEGM) serves as a coordination point for GTP. Glutamate 539 serves as a coordination point for Ca(2+). 580-583 (RDIY) provides a ligand contact to GTP. Glutamine 633 is covalently cross-linked (Isoglutamyl lysine isopeptide (Gln-Lys) (interchain with K-?)).

This sequence belongs to the transglutaminase superfamily. Transglutaminase family. Monomer. Interacts with phospholipase C; promoting alpha-1 adrenergic receptor signaling. Interacts with PLCD1. Requires Ca(2+) as cofactor. Disulfide bond formation inactivates the calcium-dependent acyltransferase activity. Cys-370 can form disulfide bonds with both Cys-230 and Cys-371: formation of a disulfide bond between Cys-230 and Cys-370 facilitates formation of the disulfide between Cys-370 and Cys-371, which promotes inactivation of the acyltransferase activity. May also form interchain disulfids between Cys-230 and Cys-370. Ca(2+) protects against disulfide bond formation and inactivation. Post-translationally, auto-transglutaminated: Forms covalent cross-links mediated by transglutaminase between Gln-633 and the epsilon-amino group of a lysine residue of itself or HMGB1, forming homopolymers and heteropolymers, respectively. In terms of processing, S-nitrosylated, leading to inactivation of the acyltransferase activity. In terms of tissue distribution, highest levels are detected in the lung. Lower levels are found in the liver, spleen and heart, but not in the brain.

The protein resides in the cytoplasm. It is found in the cytosol. Its subcellular location is the nucleus. The protein localises to the chromosome. It localises to the secreted. The protein resides in the extracellular space. It is found in the extracellular matrix. Its subcellular location is the cell membrane. The protein localises to the mitochondrion. The catalysed reaction is L-glutaminyl-[protein] + L-lysyl-[protein] = [protein]-L-lysyl-N(6)-5-L-glutamyl-[protein] + NH4(+). It carries out the reaction L-glutaminyl-[protein] + serotonin = 5-serotonyl-L-glutamyl-[protein] + NH4(+). The enzyme catalyses L-glutaminyl-[protein] + dopamine = 5-dopaminyl-L-glutamyl-[protein] + NH4(+). It catalyses the reaction L-glutaminyl-[protein] + histamine = 5-histaminyl-L-glutamyl-[protein] + NH4(+). The catalysed reaction is L-glutaminyl-[protein] + (R)-noradrenaline = 5-(R)-noradrenalinyl-L-glutamyl-[protein] + NH4(+). It carries out the reaction L-glutaminyl-[protein] + H2O = L-glutamyl-[protein] + NH4(+). Its activity is regulated as follows. Acyltransferase activity is regulated by the binding of GTP and Ca(2+): inactivated by GTP, which stabilizes its closed structure, thereby obstructing the accessibility of substrates to the active sites. In contrast, Ca(2+) acts as a cofactor by inducing conformational change to the active open form. In absence of Ca(2+), Mg(2+) may bind Ca(2+)-binding sites, promoting GTP-binding and subsequent inhibition of the acyltransferase activity. Extracellularly reduced and activated by CLIC3. Functionally, calcium-dependent acyltransferase that catalyzes the formation of covalent bonds between peptide-bound glutamine and various primary amines, such as gamma-amino group of peptide-bound lysine, or mono- and polyamines, thereby producing cross-linked or aminated proteins, respectively. Involved in many biological processes, such as bone development, angiogenesis, wound healing, cellular differentiation, chromatin modification and apoptosis. Acts as a protein-glutamine gamma-glutamyltransferase by mediating the cross-linking of proteins, such as ACO2, HSPB6, FN1, HMGB1, RAP1GDS1, SLC25A4/ANT1, SPP1 and WDR54. Under physiological conditions, the protein cross-linking activity is inhibited by GTP; inhibition is relieved by Ca(2+) in response to various stresses. When secreted, catalyzes cross-linking of proteins of the extracellular matrix, such as FN1 and SPP1 resulting in the formation of scaffolds. Plays a key role during apoptosis, both by (1) promoting the cross-linking of cytoskeletal proteins resulting in condensation of the cytoplasm, and by (2) mediating cross-linking proteins of the extracellular matrix, resulting in the irreversible formation of scaffolds that stabilize the integrity of the dying cells before their clearance by phagocytosis, thereby preventing the leakage of harmful intracellular components. In addition to protein cross-linking, can use different monoamine substrates to catalyze a vast array of protein post-translational modifications: mediates aminylation of serotonin, dopamine, noradrenaline or histamine into glutamine residues of target proteins to generate protein serotonylation, dopaminylation, noradrenalinylation or histaminylation, respectively. Mediates protein serotonylation of small GTPases during activation and aggregation of platelets, leading to constitutive activation of these GTPases. Plays a key role in chromatin organization by mediating serotonylation and dopaminylation of histone H3. Catalyzes serotonylation of 'Gln-5' of histone H3 (H3Q5ser) during serotonergic neuron differentiation, thereby facilitating transcription. Acts as a mediator of neurotransmission-independent role of nuclear dopamine in ventral tegmental area (VTA) neurons: catalyzes dopaminylation of 'Gln-5' of histone H3 (H3Q5dop), thereby regulating relapse-related transcriptional plasticity in the reward system. Regulates vein remodeling by mediating serotonylation and subsequent inactivation of ATP2A2/SERCA2. Also acts as a protein deamidase by mediating the side chain deamidation of specific glutamine residues of proteins to glutamate. Catalyzes specific deamidation of protein gliadin, a component of wheat gluten in the diet. May also act as an isopeptidase cleaving the previously formed cross-links. Also able to participate in signaling pathways independently of its acyltransferase activity: acts as a signal transducer in alpha-1 adrenergic receptor-mediated stimulation of phospholipase C-delta (PLCD) activity and is required for coupling alpha-1 adrenergic agonists to the stimulation of phosphoinositide lipid metabolism. This is Protein-glutamine gamma-glutamyltransferase 2 from Bos taurus (Bovine).